The chain runs to 561 residues: Sesquiterpene synthase 2 (561 aa).

Mg(2+)-binding residues include aspartate 313, aspartate 317, aspartate 458, and glutamate 466. The DDXXD motif motif lies at 313–317 (DDIYD).

This sequence belongs to the terpene synthase family. Tpsa subfamily. Mn(2+) is required as a cofactor. Requires Mg(2+) as cofactor.

The protein localises to the cytoplasm. The catalysed reaction is (2E,6E)-farnesyl diphosphate + H2O = kunzeaol + diphosphate. It participates in secondary metabolite biosynthesis; terpenoid biosynthesis. Involved in the biosynthesis of kunzeaol. Produces mainly (-)-germacrene D along with gamma-cadinene. The chain is Sesquiterpene synthase 2 (STS2) from Thapsia garganica (Deadly carrot).